A 219-amino-acid chain; its full sequence is Transmembrane protein 17B (219 aa).

Residue N26 is glycosylated (N-linked (GlcNAc...) asparagine). 4 helical membrane passes run M51–M71, I84–G104, L116–T136, and L147–V167. 2 N-linked (GlcNAc...) asparagine glycosylation sites follow: N195 and N203.

Belongs to the TMEM17 family. Part of the tectonic-like complex (also named B9 complex).

The protein localises to the cell projection. The protein resides in the cilium membrane. Functionally, transmembrane component of the tectonic-like complex, a complex localized at the transition zone of primary cilia and acting as a barrier that prevents diffusion of transmembrane proteins between the cilia and plasma membranes. Required for ciliogenesis and sonic hedgehog/SHH signaling. The sequence is that of Transmembrane protein 17B (Tmem17-b) from Xenopus tropicalis (Western clawed frog).